Reading from the N-terminus, the 165-residue chain is MRVLGIDPGIATLGYGVVEYKNNKFSPIVYGAITTDAGVDKAFRLYTLYKGLEDIIKLYRPEIVAIEELFYNKNSKTVITIGEVRGISILAAVNSGVKVYEYTPLQVKQAVVGYGRAEKQQVQQMVKVLLNLDEIPKPDDVADALAVAICHCHSNNMLERLGYGR.

Residues D7, E67, and D140 contribute to the active site. Mg(2+) is bound by residues D7, E67, and D140.

Belongs to the RuvC family. Homodimer which binds Holliday junction (HJ) DNA. The HJ becomes 2-fold symmetrical on binding to RuvC with unstacked arms; it has a different conformation from HJ DNA in complex with RuvA. In the full resolvosome a probable DNA-RuvA(4)-RuvB(12)-RuvC(2) complex forms which resolves the HJ. Requires Mg(2+) as cofactor.

The protein resides in the cytoplasm. It catalyses the reaction Endonucleolytic cleavage at a junction such as a reciprocal single-stranded crossover between two homologous DNA duplexes (Holliday junction).. Its function is as follows. The RuvA-RuvB-RuvC complex processes Holliday junction (HJ) DNA during genetic recombination and DNA repair. Endonuclease that resolves HJ intermediates. Cleaves cruciform DNA by making single-stranded nicks across the HJ at symmetrical positions within the homologous arms, yielding a 5'-phosphate and a 3'-hydroxyl group; requires a central core of homology in the junction. The consensus cleavage sequence is 5'-(A/T)TT(C/G)-3'. Cleavage occurs on the 3'-side of the TT dinucleotide at the point of strand exchange. HJ branch migration catalyzed by RuvA-RuvB allows RuvC to scan DNA until it finds its consensus sequence, where it cleaves and resolves the cruciform DNA. The chain is Crossover junction endodeoxyribonuclease RuvC from Caldanaerobacter subterraneus subsp. tengcongensis (strain DSM 15242 / JCM 11007 / NBRC 100824 / MB4) (Thermoanaerobacter tengcongensis).